A 326-amino-acid chain; its full sequence is Thiazole synthase (326 aa).

Lysine 168 serves as the catalytic Schiff-base intermediate with DXP. Residues glycine 229, 255 to 256, and 277 to 278 each bind 1-deoxy-D-xylulose 5-phosphate; these read AG and NT.

This sequence belongs to the ThiG family. Homotetramer. Forms heterodimers with either ThiH or ThiS.

It is found in the cytoplasm. The enzyme catalyses [ThiS sulfur-carrier protein]-C-terminal-Gly-aminoethanethioate + 2-iminoacetate + 1-deoxy-D-xylulose 5-phosphate = [ThiS sulfur-carrier protein]-C-terminal Gly-Gly + 2-[(2R,5Z)-2-carboxy-4-methylthiazol-5(2H)-ylidene]ethyl phosphate + 2 H2O + H(+). Its pathway is cofactor biosynthesis; thiamine diphosphate biosynthesis. In terms of biological role, catalyzes the rearrangement of 1-deoxy-D-xylulose 5-phosphate (DXP) to produce the thiazole phosphate moiety of thiamine. Sulfur is provided by the thiocarboxylate moiety of the carrier protein ThiS. In vitro, sulfur can be provided by H(2)S. The protein is Thiazole synthase of Magnetococcus marinus (strain ATCC BAA-1437 / JCM 17883 / MC-1).